A 383-amino-acid polypeptide reads, in one-letter code: Chaperone protein DnaJ (383 aa).

The J domain maps to 5–70; it reads DYYELLGVSR…QKRAAYDRFG (66 aa). The CR-type zinc finger occupies 140-219; it reads GTKTEIRVPT…CSGAGTVPRE (80 aa). Residues cysteine 153, cysteine 156, cysteine 171, cysteine 174, cysteine 193, cysteine 196, cysteine 207, and cysteine 210 each contribute to the Zn(2+) site. CXXCXGXG motif repeat units follow at residues 153–160, 171–178, 193–200, and 207–214; these read CDACSGTG, CPTCGGAG, and CRVCSGAG.

Belongs to the DnaJ family. As to quaternary structure, homodimer. The cofactor is Zn(2+).

The protein localises to the cytoplasm. In terms of biological role, participates actively in the response to hyperosmotic and heat shock by preventing the aggregation of stress-denatured proteins and by disaggregating proteins, also in an autonomous, DnaK-independent fashion. Unfolded proteins bind initially to DnaJ; upon interaction with the DnaJ-bound protein, DnaK hydrolyzes its bound ATP, resulting in the formation of a stable complex. GrpE releases ADP from DnaK; ATP binding to DnaK triggers the release of the substrate protein, thus completing the reaction cycle. Several rounds of ATP-dependent interactions between DnaJ, DnaK and GrpE are required for fully efficient folding. Also involved, together with DnaK and GrpE, in the DNA replication of plasmids through activation of initiation proteins. In Acidiphilium cryptum (strain JF-5), this protein is Chaperone protein DnaJ.